Consider the following 1387-residue polypeptide: Mediator of RNA polymerase II transcription subunit 13 (1387 aa).

Disordered stretches follow at residues 81 to 102 (ELNNESESPQPERKGHFTPEFS), 354 to 400 (HSAN…ESYS), and 620 to 676 (SVNS…DIPM). Composition is skewed to polar residues over residues 354–367 (HSANNSNNVSSTGE) and 390–400 (SRQNFPTESYS).

This sequence belongs to the Mediator complex subunit 13 family. As to quaternary structure, component of the SRB8-11 complex, which itself associates with the Mediator complex.

It is found in the nucleus. Functionally, component of the SRB8-11 complex. The SRB8-11 complex is a regulatory module of the Mediator complex which is itself involved in regulation of basal and activated RNA polymerase II-dependent transcription. The SRB8-11 complex may be involved in the transcriptional repression of a subset of genes regulated by Mediator. It may inhibit the association of the Mediator complex with RNA polymerase II to form the holoenzyme complex. The protein is Mediator of RNA polymerase II transcription subunit 13 (SSN2) of Kluyveromyces lactis (strain ATCC 8585 / CBS 2359 / DSM 70799 / NBRC 1267 / NRRL Y-1140 / WM37) (Yeast).